The primary structure comprises 425 residues: uncharacterized protein (425 aa).

Positions 55-181 (RYSHSLGVYE…DLDADRMDYL (127 aa)) constitute an HD domain.

This is an uncharacterized protein from Mycoplasma pneumoniae (strain ATCC 29342 / M129 / Subtype 1) (Mycoplasmoides pneumoniae).